A 434-amino-acid chain; its full sequence is D-amino acid dehydrogenase (434 aa).

3–17 provides a ligand contact to FAD; sequence VIVLGSGVIGTTTAY.

This sequence belongs to the DadA oxidoreductase family. FAD is required as a cofactor.

It carries out the reaction a D-alpha-amino acid + A + H2O = a 2-oxocarboxylate + AH2 + NH4(+). Oxidative deamination of D-amino acids. This chain is D-amino acid dehydrogenase, found in Bordetella bronchiseptica (strain ATCC BAA-588 / NCTC 13252 / RB50) (Alcaligenes bronchisepticus).